Consider the following 356-residue polypeptide: MKTFLVFALLALAAASAVAQISQQQQAPPFSQQQQPPFSQQQQPPFSQQQQSPFSQQQQQPPFAQQQQPPFSQQPPISQQQQPPFSQQQQPQFSQQQQPPYSQQQQPPYSQQQQPPFSQQQQPPFSQQQQQPPFTQQQQQQQQQQPFTQQQQPPFSQQPPISQQQQPPFLQQQRPPFSRQQQIPVIHPSVLQQLNPCKVFLQQQCIPVAMQRCLARSQMLQQSICHVMQQQCCQQLRQIPEQSRHESIRAIIYSIILQQQQQQQQQQQQQQGQSIIQYQQQQPQQLGQCVSQPLQQLQQQLGQQPQQQQLAHQIAQLEVMTSIALRTLPTMCNVNVPLYETTTSVPLGVGIGVGVY.

A signal peptide spans 1-19 (MKTFLVFALLALAAASAVA). Positions 20-179 (QISQQQQAPP…LQQQRPPFSR (160 aa)) are disordered.

Belongs to the gliadin/glutenin family. In terms of assembly, disulfide-bridge linked aggregates.

Its function is as follows. Glutenins are high-molecular weight seed storage proteins of wheat endosperm. Thought to be responsible for the visco-elastic property of wheat dough. The chain is Glutenin, low molecular weight subunit from Triticum aestivum (Wheat).